A 130-amino-acid polypeptide reads, in one-letter code: Small ribosomal subunit protein uS11 (130 aa).

Belongs to the universal ribosomal protein uS11 family. In terms of assembly, part of the 30S ribosomal subunit. Interacts with proteins S7 and S18. Binds to IF-3.

Its function is as follows. Located on the platform of the 30S subunit, it bridges several disparate RNA helices of the 16S rRNA. Forms part of the Shine-Dalgarno cleft in the 70S ribosome. The chain is Small ribosomal subunit protein uS11 from Shewanella amazonensis (strain ATCC BAA-1098 / SB2B).